A 916-amino-acid chain; its full sequence is Protein translocase subunit SecA (916 aa).

ATP is bound by residues Gln-87, Gly-105–Thr-109, and Asp-507. Zn(2+)-binding residues include Cys-900, Cys-902, Cys-911, and His-912.

Belongs to the SecA family. As to quaternary structure, monomer and homodimer. Part of the essential Sec protein translocation apparatus which comprises SecA, SecYEG and auxiliary proteins SecDF-YajC and YidC. The cofactor is Zn(2+).

It localises to the cell inner membrane. The protein localises to the cytoplasm. It carries out the reaction ATP + H2O + cellular proteinSide 1 = ADP + phosphate + cellular proteinSide 2.. Functionally, part of the Sec protein translocase complex. Interacts with the SecYEG preprotein conducting channel. Has a central role in coupling the hydrolysis of ATP to the transfer of proteins into and across the cell membrane, serving both as a receptor for the preprotein-SecB complex and as an ATP-driven molecular motor driving the stepwise translocation of polypeptide chains across the membrane. This chain is Protein translocase subunit SecA, found in Neisseria meningitidis serogroup C (strain 053442).